Consider the following 103-residue polypeptide: ATP synthase F(0) complex subunit g, mitochondrial (103 aa).

Alanine 2 carries the N-acetylalanine modification. Lysine 11, lysine 24, lysine 35, and lysine 54 each carry N6-acetyllysine.

In terms of assembly, component of the ATP synthase complex composed at least of ATP5F1A/subunit alpha, ATP5F1B/subunit beta, ATP5MC1/subunit c (homooctomer), MT-ATP6/subunit a, MT-ATP8/subunit 8, ATP5ME/subunit e, ATP5MF/subunit f, ATP5MG/subunit g, ATP5MK/subunit k, ATP5MJ/subunit j, ATP5F1C/subunit gamma, ATP5F1D/subunit delta, ATP5F1E/subunit epsilon, ATP5PF/subunit F6, ATP5PB/subunit b, ATP5PD/subunit d, ATP5PO/subunit OSCP. ATP synthase complex consists of a soluble F(1) head domain (subunits alpha(3) and beta(3)) - the catalytic core - and a membrane F(0) domain - the membrane proton channel (subunits c, a, 8, e, f, g, k and j). These two domains are linked by a central stalk (subunits gamma, delta, and epsilon) rotating inside the F1 region and a stationary peripheral stalk (subunits F6, b, d, and OSCP).

It localises to the mitochondrion. The protein resides in the mitochondrion inner membrane. Functionally, subunit g, of the mitochondrial membrane ATP synthase complex (F(1)F(0) ATP synthase or Complex V) that produces ATP from ADP in the presence of a proton gradient across the membrane which is generated by electron transport complexes of the respiratory chain. ATP synthase complex consist of a soluble F(1) head domain - the catalytic core - and a membrane F(1) domain - the membrane proton channel. These two domains are linked by a central stalk rotating inside the F(1) region and a stationary peripheral stalk. During catalysis, ATP synthesis in the catalytic domain of F(1) is coupled via a rotary mechanism of the central stalk subunits to proton translocation. In vivo, can only synthesize ATP although its ATP hydrolase activity can be activated artificially in vitro. Part of the complex F(0) domain. The sequence is that of ATP synthase F(0) complex subunit g, mitochondrial from Bos taurus (Bovine).